Reading from the N-terminus, the 129-residue chain is Bacteriohemerythrin (129 aa).

Positions 19, 59, 63, 78, 82, 119, and 124 each coordinate Fe cation.

Belongs to the hemerythrin family. Monomer.

In terms of biological role, oxygen-binding protein. May be involved in a storage mechanism or for delivery to oxygen-requiring enzymes. The oxygen-binding site contains two iron atoms. The protein is Bacteriohemerythrin of Clostridium acetobutylicum (strain ATCC 824 / DSM 792 / JCM 1419 / IAM 19013 / LMG 5710 / NBRC 13948 / NRRL B-527 / VKM B-1787 / 2291 / W).